The primary structure comprises 64 residues: Small ribosomal subunit protein bS21 (64 aa).

The segment at proline 40 to phenylalanine 64 is disordered. A compositionally biased stretch (basic residues) spans arginine 55 to phenylalanine 64.

Belongs to the bacterial ribosomal protein bS21 family.

The sequence is that of Small ribosomal subunit protein bS21 from Elusimicrobium minutum (strain Pei191).